A 129-amino-acid chain; its full sequence is MAQNKTIAVALLLATLVAVMGKEPETLEEALRAGCKEECSEQKKKAPIDEKQREDFCFIKTKSIFEAHKGVKDLKADRFIDFCNNECNAVYKEDPATSKKCAESCEADAKEAEVFLDKVVAYMQTTKQA.

This is an uncharacterized protein from Oryza sativa subsp. indica (Rice).